Here is a 353-residue protein sequence, read N- to C-terminus: C-X-C chemokine receptor type 4 (353 aa).

An important for chemokine binding and signaling region spans residues 1–22 (MEGIRIFTSDNYTEDDLGSGDY). Residues 1-39 (MEGIRIFTSDNYTEDDLGSGDYDSMKEPCFREENAHFNR) lie on the Extracellular side of the membrane. Asn11 carries an N-linked (GlcNAc...) asparagine glycan. Residue Tyr12 is modified to Sulfotyrosine. Ser19 carries O-linked (Xyl...) (chondroitin sulfate) serine glycosylation. Residue Tyr22 is modified to Sulfotyrosine. Disulfide bonds link Cys29/Cys275 and Cys110/Cys187. Residues 40-64 (IFLPTVYSIIFLTGIVGNGLVILVM) traverse the membrane as a helical segment. The Cytoplasmic segment spans residues 65 to 78 (GYQKKLRSMTDKYR). A helical membrane pass occupies residues 79–100 (LHLSVADLLFVLTLPFWAVDAV). A chemokine binding region spans residues 95–98 (WAVD). Over 101–111 (ANWYFGKFLCK) the chain is Extracellular. A helical membrane pass occupies residues 112-131 (AVHVIYTVNLYSSVLILAFI). Positions 114–118 (HVIYT) are chemokine binding. The Cytoplasmic segment spans residues 132–155 (SLDRYLAIVHATNSQKPRKLLAEK). An Important for signaling motif is present at residues 134 to 136 (DRY). The tract at residues 136 to 148 (YLAIVHATNSQKP) is involved in dimerization; when bound to chemokine. The chain crosses the membrane as a helical span at residues 156–175 (VVYVGVWLPAVLLTIPDLIF). Over 176–196 (ADIKEVDERYICDRFYPSDLW) the chain is Extracellular. Positions 187–191 (CDRFY) are chemokine binding, important for signaling. Residues 192 to 211 (PSDLWLVVFQFQHIVVGLLL) are involved in dimerization. A helical membrane pass occupies residues 197–217 (LVVFQFQHIVVGLLLPGIVIL). The Cytoplasmic portion of the chain corresponds to 218-242 (SCYCIIISKLSHSKGYQKRKALKTT). Residues 243–262 (VILILTFFACWLPYYIGISI) traverse the membrane as a helical segment. At 263–283 (DSFILLEIIQQGCEFESTVHK) the chain is on the extracellular side. The involved in dimerization stretch occupies residues 267–269 (LLE). The helical transmembrane segment at 284–303 (WISITEALAFFHCCLNPILY) threads the bilayer. Over 304–353 (AFLGAKFKTSAQHALTSVSRGSSLKILSKGKRGGHSSVSTESESSSFHSS) the chain is Cytoplasmic. Phosphoserine is present on residues Ser320 and Ser322. 2 positions are modified to phosphoserine; by PKC and GRK6: Ser325 and Ser326. The segment at 330–353 (LSKGKRGGHSSVSTESESSSFHSS) is disordered. Ser331 carries the post-translational modification Phosphoserine; by GRK6. Lys332 participates in a covalent cross-link: Glycyl lysine isopeptide (Lys-Gly) (interchain with G-Cter in ubiquitin). Low complexity predominate over residues 338-353 (HSSVSTESESSSFHSS). Position 340 is a phosphoserine; by GRK6 (Ser340). Ser349 and Ser352 each carry phosphoserine.

This sequence belongs to the G-protein coupled receptor 1 family. In terms of assembly, monomer. Can form homodimers. Interacts with CD164. Interacts with ARRB2; the interaction is dependent on the C-terminal phosphorylation of CXCR4 and allows activation of MAPK1 and MAPK3. Interacts with ARR3; the interaction is dependent on the C-terminal phosphorylation of CXCR4 and modulates calcium mobilization. Interacts with RNF113A; the interaction, enhanced by CXCL12, promotes CXCR4 ubiquitination and subsequent degradation. Interacts (via the cytoplasmic C-terminal) with ITCH (via the WW domains I and II); the interaction, enhanced by CXCL12, promotes CXCR4 ubiquitination and leads to its degradation. Interacts with extracellular ubiquitin. Interacts with DBN1; this interaction is enhanced by antigenic stimulation. Following LPS binding, may form a complex with GDF5, HSP90AA1 and HSPA8. Phosphorylated on agonist stimulation. Rapidly phosphorylated on serine and threonine residues in the C-terminal. Phosphorylation at Ser-325 and Ser-326 leads to recruitment of ITCH, ubiquitination and protein degradation. In terms of processing, ubiquitinated after ligand binding, leading to its degradation. Ubiquitinated by ITCH at the cell membrane on agonist stimulation. The ubiquitin-dependent mechanism, endosomal sorting complex required for transport (ESCRT), then targets CXCR4 for lysosomal degradation. This process is dependent also on prior Ser-/Thr-phosphorylation in the C-terminal of CXCR4. Also binding of ARRB1 to STAM negatively regulates CXCR4 sorting to lysosomes though modulating ubiquitination of SFR5S. Post-translationally, sulfation is required for efficient binding of CXCL12/SDF-1alpha and promotes its dimerization. O- and N-glycosylated. N-glycosylation can mask coreceptor function. The O-glycosylation chondroitin sulfate attachment does not affect interaction with CXCL12/SDF-1alpha nor its coreceptor activity. As to expression, brain, heart, kidney, lung and liver.

It localises to the cell membrane. Its subcellular location is the cell junction. The protein localises to the early endosome. It is found in the late endosome. The protein resides in the lysosome. Functionally, receptor for the C-X-C chemokine CXCL12/SDF-1 that transduces a signal by increasing intracellular calcium ion levels and enhancing MAPK1/MAPK3 activation. Involved in the AKT signaling cascade. Plays a role in regulation of cell migration, e.g. during wound healing. Acts as a receptor for extracellular ubiquitin; leading to enhanced intracellular calcium ions and reduced cellular cAMP levels. Binds bacterial lipopolysaccharide (LPS) et mediates LPS-induced inflammatory response, including TNF secretion by monocytes. Involved in hematopoiesis and in cardiac ventricular septum formation. Also plays an essential role in vascularization of the gastrointestinal tract, probably by regulating vascular branching and/or remodeling processes in endothelial cells. Involved in cerebellar development. In the CNS, could mediate hippocampal-neuron survival. In Bos taurus (Bovine), this protein is C-X-C chemokine receptor type 4 (CXCR4).